Reading from the N-terminus, the 480-residue chain is Protein nucleotidyltransferase YdiU (480 aa).

G86, G88, R89, K109, D121, G122, R172, and R179 together coordinate ATP. The Proton acceptor role is filled by D248. Mg(2+)-binding residues include N249 and D258. Residue D258 coordinates ATP.

The protein belongs to the SELO family. It depends on Mg(2+) as a cofactor. Mn(2+) is required as a cofactor.

It catalyses the reaction L-seryl-[protein] + ATP = 3-O-(5'-adenylyl)-L-seryl-[protein] + diphosphate. It carries out the reaction L-threonyl-[protein] + ATP = 3-O-(5'-adenylyl)-L-threonyl-[protein] + diphosphate. The catalysed reaction is L-tyrosyl-[protein] + ATP = O-(5'-adenylyl)-L-tyrosyl-[protein] + diphosphate. The enzyme catalyses L-histidyl-[protein] + UTP = N(tele)-(5'-uridylyl)-L-histidyl-[protein] + diphosphate. It catalyses the reaction L-seryl-[protein] + UTP = O-(5'-uridylyl)-L-seryl-[protein] + diphosphate. It carries out the reaction L-tyrosyl-[protein] + UTP = O-(5'-uridylyl)-L-tyrosyl-[protein] + diphosphate. Functionally, nucleotidyltransferase involved in the post-translational modification of proteins. It can catalyze the addition of adenosine monophosphate (AMP) or uridine monophosphate (UMP) to a protein, resulting in modifications known as AMPylation and UMPylation. This Klebsiella pneumoniae subsp. pneumoniae (strain ATCC 700721 / MGH 78578) protein is Protein nucleotidyltransferase YdiU.